The following is a 149-amino-acid chain: Calmodulin (149 aa).

Ala2 is modified (N-acetylalanine). 4 EF-hand domains span residues 8 to 43 (EQIA…LGQN), 44 to 79 (PTEA…KMKD), 81 to 116 (DSEE…LGEK), and 117 to 149 (LTDE…MMSK). Ca(2+) contacts are provided by Asp21, Asp23, Asp25, Thr27, Glu32, Asp57, Asp59, Asn61, Thr63, Glu68, Asp94, Asp96, Asn98, and Glu105. Lys116 carries the N6,N6,N6-trimethyllysine modification. Ca(2+)-binding residues include Asp130, Asp132, Asp134, Gln136, and Glu141.

Belongs to the calmodulin family.

Calmodulin mediates the control of a large number of enzymes, ion channels and other proteins by Ca(2+). Among the enzymes to be stimulated by the calmodulin-Ca(2+) complex are a number of protein kinases and phosphatases. The polypeptide is Calmodulin (Lumbricus rubellus (Humus earthworm)).